The following is a 131-amino-acid chain: Profilin-3 (131 aa).

Cys-13 and Cys-115 form a disulfide bridge. An Involved in PIP2 interaction motif is present at residues 81-97 (AVIRGKKGAGGITIKKT). Thr-111 bears the Phosphothreonine mark.

This sequence belongs to the profilin family. Occurs in many kinds of cells as a complex with monomeric actin in a 1:1 ratio. Phosphorylated by MAP kinases.

The protein localises to the cytoplasm. It localises to the cytoskeleton. Its function is as follows. Binds to actin and affects the structure of the cytoskeleton. At high concentrations, profilin prevents the polymerization of actin, whereas it enhances it at low concentrations. The sequence is that of Profilin-3 from Olea europaea (Common olive).